A 308-amino-acid polypeptide reads, in one-letter code: D-alanine--D-alanine ligase (308 aa).

The ATP-grasp domain maps to 104–301; sequence KQIWQGSDLP…FDELCVAILD (198 aa). Residue 130 to 185 participates in ATP binding; it reads IAELGLPVIIKPVHEGSSVGMSKVEKAEDFAAAIEKATQHDAVVMAEKWITGREFT. Residues D255, E268, and N270 each coordinate Mg(2+).

It belongs to the D-alanine--D-alanine ligase family. It depends on Mg(2+) as a cofactor. Requires Mn(2+) as cofactor.

The protein resides in the cytoplasm. The enzyme catalyses 2 D-alanine + ATP = D-alanyl-D-alanine + ADP + phosphate + H(+). It participates in cell wall biogenesis; peptidoglycan biosynthesis. Functionally, cell wall formation. The polypeptide is D-alanine--D-alanine ligase (Acinetobacter baumannii (strain AB307-0294)).